Reading from the N-terminus, the 416-residue chain is Lysosome-associated membrane glycoprotein 3 (416 aa).

A signal peptide spans 1–27 (MPRQLSAAAALFASLAVILHDGSQMRA). The Lumenal segment spans residues 28–381 (KAFPETRDYS…NVDECSSDYT (354 aa)). N-linked (GlcNAc...) asparagine glycans are attached at residues Asn-112, Asn-158, Asn-164, Asn-200, Asn-232, Asn-266, and Asn-291. Disordered regions lie at residues 136-167 (PTITPPAHTTGTSSSTVSHTTGNTTQPSNQTT) and 179-219 (STTG…LAPQ). A compositionally biased stretch (low complexity) spans 143 to 160 (HTTGTSSSTVSHTTGNTT). Positions 188–208 (PTHAPGTTAAAHNTTRTAAPA) are enriched in low complexity. Cys-237 and Cys-274 are joined by a disulfide. A disulfide bridge links Cys-339 with Cys-376. The chain crosses the membrane as a helical span at residues 382–402 (IVLPVIGAIVVGLCLMGMGVY). Residues 403-416 (KIRLRCQSSGYQRI) are Cytoplasmic-facing.

The protein belongs to the LAMP family. In terms of assembly, monomer. Interacts with FURIN. (Microbial infection) Interacts with mumps virus protein F; this interaction promotes protein F cleavage by FURIN. As to expression, detected in tonsil interdigitating dendritic cells, in spleen, lymph node, Peyer's patches in the small instestine, in thymus medulla and in B-cells (at protein level). Expressed in lymphoid organs and dendritic cells. Expressed in lung. Up-regulated in carcinomas of the esophagus, colon, rectum, ureter, stomach, breast, fallopian tube, thyroid and parotid tissues.

The protein resides in the cell surface. Its subcellular location is the lysosome membrane. It localises to the cytoplasmic vesicle membrane. The protein localises to the early endosome membrane. Functionally, lysosomal membrane glycoprotein which plays a role in the unfolded protein response (UPR) that contributes to protein degradation and cell survival during proteasomal dysfunction. Plays a role in the process of fusion of the lysosome with the autophagosome, thereby modulating the autophagic process. Promotes hepatocellular lipogenesis through activation of the PI3K/Akt pathway. May also play a role in dendritic cell function and in adaptive immunity. Its function is as follows. (Microbial infection) Plays a positive role in post-entry steps of influenza A virus replication, either virus uncoating, cytosolic transport, or nuclear import of viral components, and promotes nuclear accumulation of influenza nucleoprotein/NP at early stages of viral infection. In terms of biological role, (Microbial infection) Supports the FURIN-mediated cleavage of mumps virus fusion protein F by interacting with both FURIN and the unprocessed form but not the processed form of the viral protein F. (Microbial infection) Promotes the intracellular proliferation of Salmonella typhimuium. The sequence is that of Lysosome-associated membrane glycoprotein 3 (LAMP3) from Homo sapiens (Human).